A 184-amino-acid polypeptide reads, in one-letter code: Photosystem I assembly protein Ycf4 (184 aa).

2 helical membrane passes run 21–43 (NFCWAAILLFGALGFFFVGISSY) and 68–90 (FYGIAGLFLSFYLWCTIFWNVGS).

Belongs to the Ycf4 family.

It is found in the plastid. It localises to the chloroplast thylakoid membrane. Functionally, seems to be required for the assembly of the photosystem I complex. This is Photosystem I assembly protein Ycf4 from Physcomitrium patens (Spreading-leaved earth moss).